Consider the following 574-residue polypeptide: FAD-linked oxidoreductase penH (574 aa).

The signal sequence occupies residues 1–25 (MLPRALTLSALLALLLAIYLALAPA). Residues N48, N107, N193, N368, and N385 are each glycosylated (N-linked (GlcNAc...) asparagine). The FAD-binding PCMH-type domain occupies 121 to 305 (HQGRIPLYAA…VRVTMRTYPD (185 aa)).

This sequence belongs to the oxygen-dependent FAD-linked oxidoreductase family. FAD is required as a cofactor.

It catalyses the reaction peniprequinolone + A = yaequinolone E + AH2. Its pathway is secondary metabolite biosynthesis. It functions in the pathway alkaloid biosynthesis. It participates in mycotoxin biosynthesis. FAD-linked oxidoreductase; part of the gene cluster that mediates the biosynthesis of penigequinolones, potent insecticidal alkaloids that contain a highly modified 10-carbon prenyl group. The first stage is catalyzed by the nonribosomal peptide synthetase penN that condenses anthranilic acid and O-methyl-L-tyrosine to produce 4'-methoxycyclopeptin. 4'-methoxycyclopeptin is then converted to 4'-methoxydehydrocyclopeptin by the ketoglutarate-dependent dioxygenase penM through dehydrogenation to form a double bond between C-alpha and C-beta of the O-methyltyrosine side chain. PenM also converts its first product methoxydehydrocyclopeptin to 4'-methoxycyclopenin. The following conversion of 4'methoxycyclopenin into 4'-methoxyviridicatin is catalyzed by the cyclopenase penL. 4'-methoxyviridicatin is the precursor of quinolone natural products, and is further converted to quinolinone B. The prenyltransferase penI then catalyzes the canonical Friedel-Crafts alkylation of quinolinone B with dimethylallyl cation to yield dimethylallyl quinolone, which is subjected to FAD-dependent dehydrogenation by the FAD-linked oxidoreductase penH to yield conjugated aryl diene. The delta(3') double bond then serves as the site of the second alkylation with DMAPP catalyzed by the prenyltransferase penG to yield a carbenium ion intermediate, which can be attacked by H(2)O to yield a styrenyl quinolone containing a C3'-hydroxyprenyl chain, or undergo cyclization to yield yaequinolones J1 and J2. The conversion of the styrenyl quinolone into the tetrahydrofuran-containing yaequinolone C is performed by the FAD-dependent monooxygenase penE and involves epoxidation of the terminal C7'-C8' olefin, followed by epoxide ring opening initiated by the C3' hydroxyl group. The predicted cysteine hydrolase penJ acts as an epoxide hydrolase that enhances the rate of the 5-exo-tet cyclization step, increasing the yield of yaequinolone C. PenF catalyzes the cationic rearrangement of the epoxide formed by penE (before ring opening to produce yaequinolone C) into yaequinolone D. Finally, the short-chain dehydrogenase/reductase (SDR)-like reductase penD, catalyzes both the dehydration of yaequinolone D and the reduction of the resulting oxonium to yield penigequinolone. This is FAD-linked oxidoreductase penH from Penicillium thymicola.